We begin with the raw amino-acid sequence, 102 residues long: Small ribosomal subunit protein uS10 (102 aa).

The protein belongs to the universal ribosomal protein uS10 family. Part of the 30S ribosomal subunit.

Functionally, involved in the binding of tRNA to the ribosomes. This Listeria innocua serovar 6a (strain ATCC BAA-680 / CLIP 11262) protein is Small ribosomal subunit protein uS10.